The sequence spans 409 residues: Epoxyqueuosine reductase (409 aa).

Residues 1–23 (MDRNPELAIADARPSQDGRAAPS) form a disordered region. Asp-178 acts as the Proton donor in catalysis. The 30-residue stretch at 232-261 (AAPETPGAHCGSCTRCLGACPTGAIVAPYR) folds into the 4Fe-4S ferredoxin-type domain. 8 residues coordinate [4Fe-4S] cluster: Cys-241, Cys-244, Cys-247, Cys-251, Cys-267, Cys-294, Cys-297, and Cys-301.

The protein belongs to the QueG family. In terms of assembly, monomer. It depends on cob(II)alamin as a cofactor. [4Fe-4S] cluster serves as cofactor.

The protein resides in the cytoplasm. It catalyses the reaction epoxyqueuosine(34) in tRNA + AH2 = queuosine(34) in tRNA + A + H2O. It functions in the pathway tRNA modification; tRNA-queuosine biosynthesis. Catalyzes the conversion of epoxyqueuosine (oQ) to queuosine (Q), which is a hypermodified base found in the wobble positions of tRNA(Asp), tRNA(Asn), tRNA(His) and tRNA(Tyr). The protein is Epoxyqueuosine reductase of Burkholderia pseudomallei (strain K96243).